The following is a 372-amino-acid chain: Innexin-16 (372 aa).

The next 4 helical transmembrane spans lie at 31 to 51 (VVTTSILIAFSLLLFAKNYVG), 106 to 126 (VPFLLVIQALFFCVPRAFWII), 181 to 201 (LVMKLLILLNIVLQFFLLNSF), and 263 to 283 (IFIFLWFWFAFLLVATAGDFV). The N-linked (GlcNAc...) asparagine glycan is linked to Asn-352.

This sequence belongs to the pannexin family.

The protein localises to the cell membrane. It localises to the cell junction. It is found in the gap junction. In terms of biological role, structural component of the gap junctions. Required for signals downstream of defecation clock. The polypeptide is Innexin-16 (inx-16) (Caenorhabditis elegans).